A 316-amino-acid chain; its full sequence is MPTKGDYQPPKNGILSKLPESTVPYGELLRIHRPLGYYLNISPYVVGVAYTAAISPVTLPATFLLGRLVILSLWGFCIRSAGCAWNDLIDMDIDRQVSRTKLRPLPRGAVSPSGAALLTAFMFGCGGSLLLLLPSQCAFEAAIVVFFALLYPFGKRFSDHPQLILTNIAWAIPMAMSSLDMNPLDFPIPTLAMSFSIASVIVMIDIVYACQDAEEDKKVGARSMAVRYMEITDQIAYSLFFSGTLSLLAGGILRGLGIPFLIFSVGGHFVGFLRFLRASLGNGAKSALVESRAKSSCLLATVFLVFGLFFEYCVRL.

9 helical membrane passes run 45 to 65, 69 to 89, 108 to 128, 129 to 149, 163 to 183, 188 to 208, 233 to 253, 256 to 276, and 296 to 316; these read VVGV…TFLL, VILS…NDLI, GAVS…CGGS, LLLL…FFAL, LILT…DMNP, IPTL…DIVY, DQIA…GGIL, LGIP…LRFL, and SCLL…CVRL.

This sequence belongs to the UbiA prenyltransferase family. Mg(2+) serves as cofactor.

The protein resides in the membrane. It catalyses the reaction 3,5-dimethylorsellinate + (2E,6E)-farnesyl diphosphate = (3R)-3-farnesyl-6-hydroxy-2,3,5-trimethyl-4-oxocyclohexa-1,5-diene-1-carboxylate + diphosphate + H(+). It participates in secondary metabolite biosynthesis; terpenoid biosynthesis. Polyprenyl transferase; part of the gene cluster A that mediates the biosynthesis of the fungal meroterpenoid acetoxydehydroaustin. The first step of the pathway is the synthesis of 3,5-dimethylorsellinic acid by the polyketide synthase ausA. 3,5-dimethylorsellinic acid is then prenylated by the polyprenyl transferase ausN. Further epoxidation by the FAD-dependent monooxygenase ausM and cyclization by the probable terpene cyclase ausL lead to the formation of protoaustinoid A. Protoaustinoid A is then oxidized to spiro-lactone preaustinoid A3 by the combined action of the FAD-binding monooxygenases ausB and ausC, and the dioxygenase ausE. Acid-catalyzed keto-rearrangement and ring contraction of the tetraketide portion of preaustinoid A3 by ausJ lead to the formation of preaustinoid A4. The aldo-keto reductase ausK, with the help of ausH, is involved in the next step by transforming preaustinoid A4 into isoaustinone which is in turn hydroxylated by the P450 monooxygenase ausI to form austinolide. The cytochrome P450 monooxygenase ausG then modifies austinolide to austinol. Austinol is further acetylated to austin by the O-acetyltransferase ausP, which spontaneously changes to dehydroaustin. The cytochrome P450 monooxygenase then converts dehydroaustin is into 7-dehydrodehydroaustin. The hydroxylation catalyzed by ausR permits the second O-acetyltransferase ausQ to add an additional acetyl group to the molecule, leading to the formation of acetoxydehydroaustin. Due to genetic rearrangements of the clusters and the subsequent loss of some enzymes, the end product of the Penicillium brasilianum austinoid biosynthesis clusters is acetoxydehydroaustin. The sequence is that of Polyprenyl transferase ausN from Penicillium brasilianum.